Consider the following 172-residue polypeptide: Adenine phosphoribosyltransferase (172 aa).

This sequence belongs to the purine/pyrimidine phosphoribosyltransferase family. As to quaternary structure, homodimer.

It is found in the cytoplasm. It catalyses the reaction AMP + diphosphate = 5-phospho-alpha-D-ribose 1-diphosphate + adenine. It functions in the pathway purine metabolism; AMP biosynthesis via salvage pathway; AMP from adenine: step 1/1. Its function is as follows. Catalyzes a salvage reaction resulting in the formation of AMP, that is energically less costly than de novo synthesis. This chain is Adenine phosphoribosyltransferase, found in Staphylococcus aureus (strain Mu3 / ATCC 700698).